We begin with the raw amino-acid sequence, 271 residues long: Purine nucleoside phosphorylase 1 (271 aa).

Phosphate contacts are provided by residues serine 28, histidine 59, 79–81, and alanine 111; that span reads RFH. Residue serine 28 is modified to Phosphoserine. Residue glutamate 191 participates in a purine D-ribonucleoside binding. Serine 210 is a binding site for phosphate. Residue asparagine 233 participates in a purine D-ribonucleoside binding.

The protein belongs to the PNP/MTAP phosphorylase family. In terms of assembly, homotrimer.

It carries out the reaction a purine 2'-deoxy-D-ribonucleoside + phosphate = a purine nucleobase + 2-deoxy-alpha-D-ribose 1-phosphate. It participates in purine metabolism; purine nucleoside salvage. Its function is as follows. The purine nucleoside phosphorylases catalyze the phosphorolytic breakdown of the N-glycosidic bond in the beta-(deoxy)ribonucleoside molecules, with the formation of the corresponding free purine bases and pentose-1-phosphate. Cleaves guanosine, inosine, 2'-deoxyguanosine and 2'-deoxyinosine. The sequence is that of Purine nucleoside phosphorylase 1 (punA) from Bacillus subtilis (strain 168).